A 479-amino-acid polypeptide reads, in one-letter code: UDP-N-acetylmuramate--L-alanine ligase (479 aa).

Residue 115 to 121 (GTHGKTT) coordinates ATP.

Belongs to the MurCDEF family.

The protein resides in the cytoplasm. It carries out the reaction UDP-N-acetyl-alpha-D-muramate + L-alanine + ATP = UDP-N-acetyl-alpha-D-muramoyl-L-alanine + ADP + phosphate + H(+). The protein operates within cell wall biogenesis; peptidoglycan biosynthesis. Its function is as follows. Cell wall formation. The polypeptide is UDP-N-acetylmuramate--L-alanine ligase (Acidiphilium cryptum (strain JF-5)).